A 617-amino-acid polypeptide reads, in one-letter code: MSDNQSWNSSGSEEDLETESGPPVERCGVLSKWTNYIHGWQDRWVVLKNNTLSYYKSEDETEYGCRGSICLSKAVITPHEFDECRFDISVNDSVWYLRAQDPDHRQRWIDSIEQHKSESGYGSESSLRRHGSMVSLVSGASGYSATSTSSFKKGHSLREKLAEMETFRDILCRQVDTLQKYFDACADAVSKDELERDKVEDDEDDFLHSHPNGDYIHSSIGSKDKLFQHVSPKGINGIDFKGEAITFKATTAGILATLSHCIDLMVKREDSWQKRLDKEIEKRRRVEEAYKNAMTELKKKSHFGGPDYEEGPNSLINEEEFFDAVEAALDRQDKIEQSQSEKGRSHWPSSLPSTEAYTTAGSHRFVQAPPSCPPPTDLVSSSDEHRFRIQVEEMVQNHMTYSLQDVGGDANWQLVVEEGEMKVYRREVEENGIVLDPLKATHSVKGVTGHEVCQHFWNVDVRNDWETTIENFHVVEKLSPNAIIVYQTHKRVWPASQRDVLYLSAIRMVPAASENEMDTWIVCNFSVDHDNAPLNRCVRAKINIAMICQTLVSPPEGNKEISRDNIQCKITYVANVNPGGWAPASVLRAVAKREYPKFLKRFTSYVQEKTAGKSILF.

Residues 1-11 (MSDNQSWNSSG) show a composition bias toward polar residues. The interval 1–23 (MSDNQSWNSSGSEEDLETESGPP) is disordered. The 95-residue stretch at 23–117 (PVERCGVLSK…WIDSIEQHKS (95 aa)) folds into the PH domain. The stretch at 268–302 (REDSWQKRLDKEIEKRRRVEEAYKNAMTELKKKSH) forms a coiled coil. The short motif at 320 to 326 (EFFDAVE) is the FFAT element. A compositionally biased stretch (basic and acidic residues) spans 332-344 (QDKIEQSQSEKGR). Residues 332 to 355 (QDKIEQSQSEKGRSHWPSSLPSTE) are disordered. Residues 383-611 (DEHRFRIQVE…FTSYVQEKTA (229 aa)) form the START domain. Residues glutamate 466, glutamine 487, asparagine 524, and tyrosine 572 each coordinate an N-acylsphing-4-enine.

The protein localises to the cytoplasm. It is found in the golgi apparatus. It localises to the endoplasmic reticulum. It carries out the reaction N-hexadecanoylsphing-4-enine(in) = N-hexadecanoylsphing-4-enine(out). Its function is as follows. May mediate the intracellular trafficking of ceramide in a non-vesicular manner. The chain is Ceramide transfer protein (cert1) from Xenopus tropicalis (Western clawed frog).